Here is a 157-residue protein sequence, read N- to C-terminus: Protein TIFY 8 (157 aa).

Residues 33-68 enclose the Tify domain; the sequence is VPGTTEQLTIFYSGSMVKFDNVPREKIRYACRLRRL. The interval 126–147 is disordered; it reads SIGAQRTGTPPSRRRIHARGKS. Residues 137–147 show a composition bias toward basic residues; it reads SRRRIHARGKS.

Belongs to the TIFY/JAZ family. Ubiquitinated. Targeted for degradation by the SCF(COI1) E3 ubiquitin ligase-proteasome pathway during jasmonate signaling.

In terms of biological role, repressor of jasmonate responses. This is Protein TIFY 8 from Oryza sativa subsp. japonica (Rice).